We begin with the raw amino-acid sequence, 309 residues long: Methionyl-tRNA formyltransferase (309 aa).

S107–P110 serves as a coordination point for (6S)-5,6,7,8-tetrahydrofolate.

Belongs to the Fmt family.

It catalyses the reaction L-methionyl-tRNA(fMet) + (6R)-10-formyltetrahydrofolate = N-formyl-L-methionyl-tRNA(fMet) + (6S)-5,6,7,8-tetrahydrofolate + H(+). In terms of biological role, attaches a formyl group to the free amino group of methionyl-tRNA(fMet). The formyl group appears to play a dual role in the initiator identity of N-formylmethionyl-tRNA by promoting its recognition by IF2 and preventing the misappropriation of this tRNA by the elongation apparatus. This Borrelia duttonii (strain Ly) protein is Methionyl-tRNA formyltransferase.